Reading from the N-terminus, the 353-residue chain is Histidinol-phosphate aminotransferase (353 aa).

Position 218 is an N6-(pyridoxal phosphate)lysine (Lys218).

It belongs to the class-II pyridoxal-phosphate-dependent aminotransferase family. Histidinol-phosphate aminotransferase subfamily. Homodimer. Requires pyridoxal 5'-phosphate as cofactor.

The enzyme catalyses L-histidinol phosphate + 2-oxoglutarate = 3-(imidazol-4-yl)-2-oxopropyl phosphate + L-glutamate. Its pathway is amino-acid biosynthesis; L-histidine biosynthesis; L-histidine from 5-phospho-alpha-D-ribose 1-diphosphate: step 7/9. The sequence is that of Histidinol-phosphate aminotransferase from Synechococcus sp. (strain JA-2-3B'a(2-13)) (Cyanobacteria bacterium Yellowstone B-Prime).